The sequence spans 1032 residues: Integrin alpha-4 (1032 aa).

Positions 1 to 34 (MIRDLGKVGKVSLLLDHIWTGILLYTVILTPADC) are cleaved as a signal peptide. Residues 35 to 974 (YNIDESSPML…LHNLKPKKHV (940 aa)) are Extracellular-facing. FG-GAP repeat units follow at residues 36–100 (NIDE…PNRT), 113–177 (KCGK…TELS), 186–237 (DHVR…TIKS), 238–291 (YVDL…EKQL), 292–351 (TILF…GAME), 353–411 (LKFE…GITP), and 415–477 (QRLQ…LPST). 2 N-linked (GlcNAc...) asparagine glycosylation sites follow: asparagine 81 and asparagine 98. Disulfide bonds link cysteine 91/cysteine 101, cysteine 144/cysteine 165, and cysteine 183/cysteine 198. N-linked (GlcNAc...) asparagine glycosylation occurs at asparagine 229. Residues aspartate 314, asparagine 316, aspartate 318, leucine 320, aspartate 322, aspartate 376, aspartate 378, aspartate 380, aspartate 384, aspartate 438, aspartate 440, asparagine 442, tyrosine 444, and aspartate 446 each contribute to the Ca(2+) site. Asparagine 479 is a glycosylation site (N-linked (GlcNAc...) asparagine). A disulfide bond links cysteine 485 and cysteine 494. Residues asparagine 496, asparagine 517, asparagine 537, asparagine 626, and asparagine 660 are each glycosylated (N-linked (GlcNAc...) asparagine). Cystine bridges form between cysteine 500-cysteine 556 and cysteine 622-cysteine 627. Cysteine 698 and cysteine 712 are disulfide-bonded. 2 N-linked (GlcNAc...) asparagine glycosylation sites follow: asparagine 746 and asparagine 857. 2 disulfide bridges follow: cysteine 853/cysteine 889 and cysteine 896/cysteine 901. A helical membrane pass occupies residues 975–998 (IYMIIGISLLLGILLFSLLTYILW). Over 999–1032 (KVGFFRRKYQPIGTEETSRRESWNYLNKDEKEVK) the chain is Cytoplasmic. Positions 1001 to 1005 (GFFRR) match the GFFKR motif motif.

This sequence belongs to the integrin alpha chain family. Heterodimer of an alpha and a beta subunit.

It localises to the membrane. Functionally, fibronectin and V-CAM adhesion receptor. This is Integrin alpha-4 (itga4) from Xenopus laevis (African clawed frog).